Consider the following 314-residue polypeptide: Glyceraldehyde-3-phosphate dehydrogenase A, chloroplastic (314 aa).

Residues 5–6 (RI), D29, and R74 contribute to the NADP(+) site. C13 and C283 are joined by a disulfide. D-glyceraldehyde 3-phosphate is bound by residues 147–149 (SCT), T178, R193, 206–207 (TG), and R229. C148 (nucleophile) is an active-site residue. Residue N311 participates in NADP(+) binding.

Belongs to the glyceraldehyde-3-phosphate dehydrogenase family. As to quaternary structure, homotetramer.

The protein localises to the plastid. It localises to the chloroplast. The enzyme catalyses D-glyceraldehyde 3-phosphate + phosphate + NADP(+) = (2R)-3-phospho-glyceroyl phosphate + NADPH + H(+). Its pathway is carbohydrate biosynthesis; Calvin cycle. The chain is Glyceraldehyde-3-phosphate dehydrogenase A, chloroplastic (GapA) from Scenedesmus vacuolatus (Green alga).